A 702-amino-acid chain; its full sequence is Arylphorin (702 aa).

A signal peptide spans 1–16 (MQTVLFLAALVSLAAA). N-linked (GlcNAc...) asparagine glycosylation is found at Asn-211 and Asn-481.

Belongs to the hemocyanin family. As to expression, hemolymph.

It is found in the secreted. In terms of biological role, larval storage protein (LSP) which may serve as a store of amino acids for synthesis of adult proteins. Binds the A.niger cell wall component alpha-1,3-glucan, a fungal pathogen-associated molecular pattern (PAMP) that activates the host immune response. The sequence is that of Arylphorin (LOC113516268) from Galleria mellonella (Greater wax moth).